The following is a 70-amino-acid chain: Large ribosomal subunit protein uL29 (70 aa).

It belongs to the universal ribosomal protein uL29 family.

The protein is Large ribosomal subunit protein uL29 of Clostridium novyi (strain NT).